Here is a 460-residue protein sequence, read N- to C-terminus: Ribosomal protein uS12 methylthiotransferase RimO (460 aa).

An MTTase N-terminal domain is found at 16–130; that stretch reads NKIHFISLGC…ILSAIESKES (115 aa). Positions 25, 61, 93, 164, 168, and 171 each coordinate [4Fe-4S] cluster. Residues 150-382 form the Radical SAM core domain; it reads STPKHYAYLK…SQTQKKNVEK (233 aa). A TRAM domain is found at 385 to 455; sequence KQFVGKIVEA…GYDLVGRVVN (71 aa).

This sequence belongs to the methylthiotransferase family. RimO subfamily. Requires [4Fe-4S] cluster as cofactor.

Its subcellular location is the cytoplasm. It carries out the reaction L-aspartate(89)-[ribosomal protein uS12]-hydrogen + (sulfur carrier)-SH + AH2 + 2 S-adenosyl-L-methionine = 3-methylsulfanyl-L-aspartate(89)-[ribosomal protein uS12]-hydrogen + (sulfur carrier)-H + 5'-deoxyadenosine + L-methionine + A + S-adenosyl-L-homocysteine + 2 H(+). In terms of biological role, catalyzes the methylthiolation of an aspartic acid residue of ribosomal protein uS12. The polypeptide is Ribosomal protein uS12 methylthiotransferase RimO (Chlamydia abortus (strain DSM 27085 / S26/3) (Chlamydophila abortus)).